A 350-amino-acid polypeptide reads, in one-letter code: MSAASPLRWQLTEHAPLRALNTFHVDATARWLLNIHAPEALPDALAAPQIAGQPLLVLGSGSNVLLAGDPPGCVLCFDNRDITIIAHHADHAIVRAGAGVNWHGLVMYSLQQGLSGLENLALIPGTVGACPIQNIGAYGAQVSDFIHVVEAYDRGSQQFVRMTPAECAFGYRDSVFKQQPDRYLIVAVEFNLPLLHELRLDYAGIRDELARMGAELAGAADVAQAVINIRQRKLPDPEVLGNAGSFFKNPLLPSEQIAALQASFADMPVFPGEQPGQGKLSAAWLIEQCGWKGKREGDAGISEAHALVLVNHGSASGAQLLAFARQVAESVRERYSVILEPEPRVIGAHW.

One can recognise an FAD-binding PCMH-type domain in the interval His-24–Leu-195. Residue Arg-172 is part of the active site. The active-site Proton donor is Ser-245. Residue Glu-342 is part of the active site.

Belongs to the MurB family. It depends on FAD as a cofactor.

The protein resides in the cytoplasm. It catalyses the reaction UDP-N-acetyl-alpha-D-muramate + NADP(+) = UDP-N-acetyl-3-O-(1-carboxyvinyl)-alpha-D-glucosamine + NADPH + H(+). The protein operates within cell wall biogenesis; peptidoglycan biosynthesis. Its function is as follows. Cell wall formation. This is UDP-N-acetylenolpyruvoylglucosamine reductase from Xanthomonas campestris pv. campestris (strain B100).